The chain runs to 278 residues: Large ribosomal subunit protein uL2 (278 aa).

Composition is skewed to basic residues over residues 210–219 (RKRWLGKRPQ) and 252–263 (KKSRGIKTRNSK). Residues 210-278 (RKRWLGKRPQ…LIIRHRKGNK (69 aa)) form a disordered region.

The protein belongs to the universal ribosomal protein uL2 family. In terms of assembly, part of the 50S ribosomal subunit. Forms a bridge to the 30S subunit in the 70S ribosome.

One of the primary rRNA binding proteins. Required for association of the 30S and 50S subunits to form the 70S ribosome, for tRNA binding and peptide bond formation. It has been suggested to have peptidyltransferase activity; this is somewhat controversial. Makes several contacts with the 16S rRNA in the 70S ribosome. This Lactobacillus gasseri (strain ATCC 33323 / DSM 20243 / BCRC 14619 / CIP 102991 / JCM 1131 / KCTC 3163 / NCIMB 11718 / NCTC 13722 / AM63) protein is Large ribosomal subunit protein uL2.